Consider the following 202-residue polypeptide: CASP-like protein 1U4 (202 aa).

Topologically, residues 1–10 (MCLPAKWLHP) are cytoplasmic. A helical transmembrane segment spans residues 11-31 (VSLIFRVAGIGLAAVSAAAML). Residues 32-56 (TASQCTVYADYGWRPRTVTYSDFPA) lie on the Extracellular side of the membrane. A helical transmembrane segment spans residues 57 to 77 (FVYLVAATAIATLLEAVALFL). Residues 78-94 (SWSKKGKSKKSWRVLTM) are Cytoplasmic-facing. Residues 95–115 (LLLGAVVPALLYTSAGAAFAV) form a helical membrane-spanning segment. At 116–146 (GWEDIYYYLEPIGRRFSVCRSSVAGGRFCEH) the chain is on the extracellular side. Residues 147–167 (VHVSMWLALGAAVAVSFAEFL) form a helical membrane-spanning segment. The Cytoplasmic segment spans residues 168–202 (TTFRWCHGSGSCSDSDSDSDSDSESGCGHGCHCKH).

The protein belongs to the Casparian strip membrane proteins (CASP) family. As to quaternary structure, homodimer and heterodimers.

Its subcellular location is the cell membrane. The sequence is that of CASP-like protein 1U4 from Sorghum bicolor (Sorghum).